The sequence spans 216 residues: Phosphatidylserine decarboxylase proenzyme (216 aa).

Ser185 serves as the catalytic Schiff-base intermediate with substrate; via pyruvic acid. At Ser185 the chain carries Pyruvic acid (Ser); by autocatalysis.

It belongs to the phosphatidylserine decarboxylase family. PSD-A subfamily. As to quaternary structure, heterodimer of a large membrane-associated beta subunit and a small pyruvoyl-containing alpha subunit. Pyruvate is required as a cofactor. Post-translationally, is synthesized initially as an inactive proenzyme. Formation of the active enzyme involves a self-maturation process in which the active site pyruvoyl group is generated from an internal serine residue via an autocatalytic post-translational modification. Two non-identical subunits are generated from the proenzyme in this reaction, and the pyruvate is formed at the N-terminus of the alpha chain, which is derived from the carboxyl end of the proenzyme. The post-translation cleavage follows an unusual pathway, termed non-hydrolytic serinolysis, in which the side chain hydroxyl group of the serine supplies its oxygen atom to form the C-terminus of the beta chain, while the remainder of the serine residue undergoes an oxidative deamination to produce ammonia and the pyruvoyl prosthetic group on the alpha chain.

It localises to the cell membrane. The enzyme catalyses a 1,2-diacyl-sn-glycero-3-phospho-L-serine + H(+) = a 1,2-diacyl-sn-glycero-3-phosphoethanolamine + CO2. It functions in the pathway phospholipid metabolism; phosphatidylethanolamine biosynthesis; phosphatidylethanolamine from CDP-diacylglycerol: step 2/2. Functionally, catalyzes the formation of phosphatidylethanolamine (PtdEtn) from phosphatidylserine (PtdSer). This is Phosphatidylserine decarboxylase proenzyme from Nitrosomonas eutropha (strain DSM 101675 / C91 / Nm57).